Here is a 384-residue protein sequence, read N- to C-terminus: Putative glutamate--cysteine ligase 2-1 (384 aa).

The protein belongs to the glutamate--cysteine ligase type 2 family. YbdK subfamily.

The catalysed reaction is L-cysteine + L-glutamate + ATP = gamma-L-glutamyl-L-cysteine + ADP + phosphate + H(+). In terms of biological role, ATP-dependent carboxylate-amine ligase which exhibits weak glutamate--cysteine ligase activity. The chain is Putative glutamate--cysteine ligase 2-1 from Paenarthrobacter aurescens (strain TC1).